We begin with the raw amino-acid sequence, 33 residues long: Photosystem II reaction center protein Psb30 (33 aa).

The chain crosses the membrane as a helical span at residues 7–27; it reads IQLGSLTLITLTGPLIIGIIF.

The protein belongs to the Psb30/Ycf12 family. As to quaternary structure, PSII is composed of 1 copy each of membrane proteins PsbA, PsbB, PsbC, PsbD, PsbE, PsbF, PsbH, PsbI, PsbJ, PsbK, PsbL, PsbM, PsbT, PsbY, PsbZ, Psb30/Ycf12, peripheral proteins of the oxygen-evolving complex and a large number of cofactors. It forms dimeric complexes.

Its subcellular location is the plastid. It localises to the chloroplast thylakoid membrane. Its function is as follows. A core subunit of photosystem II (PSII), probably helps stabilize the reaction center. This chain is Photosystem II reaction center protein Psb30, found in Euglena gracilis.